Here is a 144-residue protein sequence, read N- to C-terminus: Neuritin-B (144 aa).

An N-terminal signal peptide occupies residues 1-27 (MGLKLSGRYIFLVLAVHLAYLLQAVKA). S114 carries GPI-anchor amidated serine lipidation. Residues 115-144 (TGAPGPRLLFPAFLPLLIVFLSALLNWVLQ) constitute a propeptide, removed in mature form.

The protein belongs to the neuritin family.

Its subcellular location is the cell membrane. Modulates postsynaptic dendritic arbor elaboration and synaptic maturation. This Xenopus laevis (African clawed frog) protein is Neuritin-B (nrn1-b).